A 793-amino-acid polypeptide reads, in one-letter code: Spindle and centriole-associated protein 1 (793 aa).

The segment at 1 to 29 is disordered; the sequence is MSYLRASRTSSNLSLAKKPSKTRKKLQAR. Over residues 18–27 the composition is skewed to basic residues; the sequence is KPSKTRKKLQ. The stretch at 312-405 forms a coiled coil; sequence SLGLLNSMIM…LTAEILSLKE (94 aa). A disordered region spans residues 519-542; that stretch reads KTVGNLSSHSAVPKRAANRLPSPP. Positions 622–712 form a coiled coil; sequence LQNEDLVSQM…LLKLIEQQKQ (91 aa). The segment covering 718 to 739 has biased composition (polar residues); the sequence is PTLSPITPQGRRTGSSLDTTPL. The segment at 718–783 is disordered; the sequence is PTLSPITPQG…RSQAANDRGE (66 aa). Over residues 740-753 the composition is skewed to low complexity; it reads SSCSTSGRRSSGAS. Polar residues predominate over residues 754 to 778; sequence NKSESISTSVGSLRSASTGRRSQAA.

The protein localises to the cytoplasm. It is found in the cytoskeleton. The protein resides in the microtubule organizing center. It localises to the centrosome. Its subcellular location is the centriole. The protein localises to the spindle. Functionally, regulator required for centriole duplication. This Xenopus laevis (African clawed frog) protein is Spindle and centriole-associated protein 1 (spice1).